The primary structure comprises 198 residues: Imidazole glycerol phosphate synthase subunit HisH (198 aa).

Residues 1 to 194 (MIAIIDYGLG…LKGGFQDDQT (194 aa)) form the Glutamine amidotransferase type-1 domain. Cys-77 (nucleophile) is an active-site residue. Residues His-169 and Glu-171 contribute to the active site.

In terms of assembly, heterodimer of HisH and HisF.

It is found in the cytoplasm. The enzyme catalyses 5-[(5-phospho-1-deoxy-D-ribulos-1-ylimino)methylamino]-1-(5-phospho-beta-D-ribosyl)imidazole-4-carboxamide + L-glutamine = D-erythro-1-(imidazol-4-yl)glycerol 3-phosphate + 5-amino-1-(5-phospho-beta-D-ribosyl)imidazole-4-carboxamide + L-glutamate + H(+). The catalysed reaction is L-glutamine + H2O = L-glutamate + NH4(+). Its pathway is amino-acid biosynthesis; L-histidine biosynthesis; L-histidine from 5-phospho-alpha-D-ribose 1-diphosphate: step 5/9. IGPS catalyzes the conversion of PRFAR and glutamine to IGP, AICAR and glutamate. The HisH subunit catalyzes the hydrolysis of glutamine to glutamate and ammonia as part of the synthesis of IGP and AICAR. The resulting ammonia molecule is channeled to the active site of HisF. The chain is Imidazole glycerol phosphate synthase subunit HisH from Staphylococcus saprophyticus subsp. saprophyticus (strain ATCC 15305 / DSM 20229 / NCIMB 8711 / NCTC 7292 / S-41).